A 458-amino-acid chain; its full sequence is Monomethylamine methyltransferase MtmB1 (458 aa).

Pyl202 is a non-standard amino acid (pyrrolysine).

The protein belongs to the monomethylamine methyltransferase family. Can form a complex with MtmC.

The enzyme catalyses Co(I)-[methylamine-specific corrinoid protein] + methylamine + H(+) = methyl-Co(III)-[methylamine-specific corrinoid protein] + NH4(+). Its pathway is one-carbon metabolism; methanogenesis from methylamine. Functionally, catalyzes the transfer of the methyl group from monomethylamine to the corrinoid cofactor of MtmC. The chain is Monomethylamine methyltransferase MtmB1 (mtmB1) from Methanosarcina acetivorans (strain ATCC 35395 / DSM 2834 / JCM 12185 / C2A).